We begin with the raw amino-acid sequence, 178 residues long: ATP-dependent protease subunit HslV (178 aa).

The active site involves T5. Positions 160, 163, and 166 each coordinate Na(+).

Belongs to the peptidase T1B family. HslV subfamily. A double ring-shaped homohexamer of HslV is capped on each side by a ring-shaped HslU homohexamer. The assembly of the HslU/HslV complex is dependent on binding of ATP.

The protein resides in the cytoplasm. It catalyses the reaction ATP-dependent cleavage of peptide bonds with broad specificity.. Allosterically activated by HslU binding. Its function is as follows. Protease subunit of a proteasome-like degradation complex believed to be a general protein degrading machinery. The sequence is that of ATP-dependent protease subunit HslV from Magnetococcus marinus (strain ATCC BAA-1437 / JCM 17883 / MC-1).